The chain runs to 137 residues: Proofreading thioesterase EntH (137 aa).

The Nucleophile or proton acceptor role is filled by Glu63.

This sequence belongs to the thioesterase PaaI family. Homotetramer. Dimer of dimers. Interacts specifically with the aryl carrier protein (ArCP) domain of EntB.

The protein resides in the cytoplasm. It participates in siderophore biosynthesis; enterobactin biosynthesis. Required for optimal enterobactin synthesis. Acts as a proofreading enzyme that prevents EntB misacylation by hydrolyzing the thioester bound existing between EntB and wrongly charged molecules. This Klebsiella pneumoniae subsp. pneumoniae (strain ATCC 700721 / MGH 78578) protein is Proofreading thioesterase EntH (entH).